Reading from the N-terminus, the 319-residue chain is uncharacterized protein (319 aa).

Residues 281–319 (KVERKQRRRDDQNIMRSKLPQQRQNPFCSTERPKRARCD) form a disordered region. Over residues 299-308 (LPQQRQNPFC) the composition is skewed to polar residues.

The protein resides in the cytoplasm. The protein localises to the nucleus. This is an uncharacterized protein from Saccharomyces cerevisiae (strain ATCC 204508 / S288c) (Baker's yeast).